The following is a 357-amino-acid chain: MTVTRVGLVMHGGRAQAGDAARIVRGWCAERGVHCADIDVWRDDTRHSAREEVAAAGNPDLIVTLGGDGTFLRGARLAAENDALVLGVDLGRVGFLTEVPAAAVCEALEAVQEDRITVESRMLLTLRASRRLQVPTGMEALLRYGRGPLLPPPRVRTDCAEGDDWGIALHVTALNDIVLEKLARDRQVSVGVYLAGRLLASYSADALLVATPTGSTAYSFAAGGPVVSPRAEALIFTPVAPHMAFNRSVVAAPDEPIALRVLDRSGPAAVSVDGQLRGVLDPGDWIGVYAAPRRLKAVRLGPMDFYGRLRERMNLTDAPAAVADGQAAPLWPVTSAPPADLAHLTLPPGPGDTPSAS.

Asp-68 serves as the catalytic Proton acceptor. NAD(+) is bound by residues 68–69 (DG), Arg-73, 175–176 (ND), Arg-186, Asp-205, Ala-240, and Gln-275.

It belongs to the NAD kinase family. A divalent metal cation serves as cofactor.

It localises to the cytoplasm. The catalysed reaction is NAD(+) + ATP = ADP + NADP(+) + H(+). Functionally, involved in the regulation of the intracellular balance of NAD and NADP, and is a key enzyme in the biosynthesis of NADP. Catalyzes specifically the phosphorylation on 2'-hydroxyl of the adenosine moiety of NAD to yield NADP. This chain is NAD kinase 1, found in Streptomyces avermitilis (strain ATCC 31267 / DSM 46492 / JCM 5070 / NBRC 14893 / NCIMB 12804 / NRRL 8165 / MA-4680).